Consider the following 93-residue polypeptide: Bacterial microcompartment shell protein PduA (93 aa).

The BMC domain occupies 5 to 89 (ALGMVETKGL…PHTDVEKILP (85 aa)).

Belongs to the bacterial microcompartments protein family. In terms of assembly, homohexamer with a central pore; Lys-26 and Arg-79 interactions are very important for hexamer symmetry. The hexamers pack against each other in arrays. Interacts individually with shell proteins PduB, PduB', PduJ, PduK, PduN and PduU. Modeling suggests PduC, PduD, PduE, PduL and PduP interact with a cleft formed by the C-terminal segments of 2 adjacent PduA subunits (on the BMC luminal side) in the hexamer.

It localises to the bacterial microcompartment. The protein operates within polyol metabolism; 1,2-propanediol degradation. One of the major shell proteins of the bacterial microcompartment (BMC) dedicated to 1,2-propanediol (1,2-PD) degradation, probably important for metabolite diffusion into and out of the BMC. Overexpression of a C-terminally mutated form (PduA*) makes thin parallel filaments with a honeycomb-like assembly in cross-section that probably form nanotubes. The filaments interfere with septation. PduA is probably the hub for binding multiple enzymes to the interior of the BMC. At least one of PduA or PduJ is required for BMC assembly; it must be encoded as the first gene in the pdu operon. Its function is as follows. Expression of a cosmid containing the full 21-gene pdu operon in E.coli allows E.coli to grow on 1,2-PD with the appearance of BMCs in its cytoplasm. Overexpression of this protein leads to aberrant intracellular filaments. In terms of biological role, the 1,2-PD-specific bacterial microcompartment (BMC) concentrates low levels of 1,2-PD catabolic enzymes, concentrates volatile reaction intermediates thus enhancing pathway flux and keeps the level of toxic, mutagenic propionaldehyde low. The protein is Bacterial microcompartment shell protein PduA of Citrobacter freundii.